Here is a 251-residue protein sequence, read N- to C-terminus: Probable transcriptional regulatory protein cgR_1708 (251 aa).

The tract at residues 1-22 (MAGHSKWATTKHKKAANDAKRG) is disordered.

It belongs to the TACO1 family.

The protein localises to the cytoplasm. The sequence is that of Probable transcriptional regulatory protein cgR_1708 from Corynebacterium glutamicum (strain R).